The sequence spans 612 residues: UvrABC system protein C (612 aa).

Positions 20–98 constitute a GIY-YIG domain; the sequence is THSGVYRMLD…IKQHRPKYNI (79 aa). The region spanning 208–243 is the UVR domain; the sequence is SSVLEEISAKMYQASEDMEYEKAQVYRDQLVVLRKL.

This sequence belongs to the UvrC family. As to quaternary structure, interacts with UvrB in an incision complex.

It is found in the cytoplasm. In terms of biological role, the UvrABC repair system catalyzes the recognition and processing of DNA lesions. UvrC both incises the 5' and 3' sides of the lesion. The N-terminal half is responsible for the 3' incision and the C-terminal half is responsible for the 5' incision. The sequence is that of UvrABC system protein C from Francisella tularensis subsp. tularensis (strain WY96-3418).